We begin with the raw amino-acid sequence, 87 residues long: Small ribosomal subunit protein uS17 (87 aa).

It belongs to the universal ribosomal protein uS17 family. Part of the 30S ribosomal subunit.

Functionally, one of the primary rRNA binding proteins, it binds specifically to the 5'-end of 16S ribosomal RNA. This is Small ribosomal subunit protein uS17 from Alkalilimnicola ehrlichii (strain ATCC BAA-1101 / DSM 17681 / MLHE-1).